We begin with the raw amino-acid sequence, 163 residues long: Probable ribosome biogenesis protein RLP24 (163 aa).

It belongs to the eukaryotic ribosomal protein eL24 family. Associated with nucleolar and cytoplasmic pre-60S particles. At the end of biogenesis it dissociates from cytoplasmic pre-60S particles and is likely to be exchanged for its ribosomal homolog, RPL24.

It is found in the nucleus. The protein resides in the nucleolus. Its function is as follows. Involved in the biogenesis of the 60S ribosomal subunit. Ensures the docking of GTPBP4/NOG1 to pre-60S particles. The polypeptide is Probable ribosome biogenesis protein RLP24 (Rsl24d1) (Mus musculus (Mouse)).